The following is a 201-amino-acid chain: Recombination protein RecR (201 aa).

Residues 60-75 form a C4-type zinc finger; it reads CSCCGNVDTIDPCTVC. Residues 83-178 enclose the Toprim domain; the sequence is SMIIVVEDVS…KTTRLAHGVP (96 aa).

It belongs to the RecR family.

Functionally, may play a role in DNA repair. It seems to be involved in an RecBC-independent recombinational process of DNA repair. It may act with RecF and RecO. This Allorhizobium ampelinum (strain ATCC BAA-846 / DSM 112012 / S4) (Agrobacterium vitis (strain S4)) protein is Recombination protein RecR.